The sequence spans 264 residues: Anamorsin homolog 2 (264 aa).

Positions 1-142 are N-terminal SAM-like domain; sequence MAATAAALAV…KVSWSMGSSF (142 aa). The interval 143 to 174 is linker; that stretch reads PLKKATKGLPKIQIDDDSELIDEDSLLTEDDL. 4 residues coordinate [2Fe-2S] cluster: Cys-185, Cys-194, Cys-197, and Cys-199. Residues 185-199 are fe-S binding site A; sequence CEVGATRKACKNCTC. 4 residues coordinate [4Fe-4S] cluster: Cys-225, Cys-228, Cys-236, and Cys-239. 2 short sequence motifs (cx2C motif) span residues 225-228 and 236-239; these read CGNC and CGTC. A fe-S binding site B region spans residues 225-239; the sequence is CGNCGLGDAFRCGTC.

This sequence belongs to the anamorsin family. In terms of assembly, monomer. Requires [2Fe-2S] cluster as cofactor. The cofactor is [4Fe-4S] cluster.

Its subcellular location is the cytoplasm. The protein resides in the mitochondrion intermembrane space. In terms of biological role, component of the cytosolic iron-sulfur (Fe-S) protein assembly (CIA) machinery. Required for the maturation of extramitochondrial Fe-S proteins. Part of an electron transfer chain functioning in an early step of cytosolic Fe-S biogenesis, facilitating the de novo assembly of a [4Fe-4S] cluster on the cytosolic Fe-S scaffold complex. Electrons are transferred from NADPH via a FAD- and FMN-containing diflavin oxidoreductase. Together with the diflavin oxidoreductase, also required for the assembly of the diferric tyrosyl radical cofactor of ribonucleotide reductase (RNR), probably by providing electrons for reduction during radical cofactor maturation in the catalytic small subunit. The sequence is that of Anamorsin homolog 2 from Oryza sativa subsp. indica (Rice).